Reading from the N-terminus, the 336-residue chain is UPF0324 membrane protein BT_1919 (336 aa).

Transmembrane regions (helical) follow at residues 2–19, 23–45, 85–107, 117–134, 147–169, 210–232, 253–275, and 310–332; these read LHGV…FYIG, FVRS…YANS, IGLP…GIYL, IALL…AAIL, TAVS…PFLY, AIIV…TYLV, WFAI…AQLV, and FVLA…KYLT.

It belongs to the UPF0324 family.

It localises to the cell membrane. This chain is UPF0324 membrane protein BT_1919, found in Bacteroides thetaiotaomicron (strain ATCC 29148 / DSM 2079 / JCM 5827 / CCUG 10774 / NCTC 10582 / VPI-5482 / E50).